The chain runs to 115 residues: Large ribosomal subunit protein bL20 (115 aa).

This sequence belongs to the bacterial ribosomal protein bL20 family.

Its function is as follows. Binds directly to 23S ribosomal RNA and is necessary for the in vitro assembly process of the 50S ribosomal subunit. It is not involved in the protein synthesizing functions of that subunit. The chain is Large ribosomal subunit protein bL20 from Pelodictyon phaeoclathratiforme (strain DSM 5477 / BU-1).